A 162-amino-acid chain; its full sequence is SsrA-binding protein (162 aa).

Basic and acidic residues predominate over residues 137-154; it reads HDKREDTKAREWDREKAR. Positions 137-162 are disordered; sequence HDKREDTKAREWDREKARIMKNKHRG.

This sequence belongs to the SmpB family.

The protein localises to the cytoplasm. Functionally, required for rescue of stalled ribosomes mediated by trans-translation. Binds to transfer-messenger RNA (tmRNA), required for stable association of tmRNA with ribosomes. tmRNA and SmpB together mimic tRNA shape, replacing the anticodon stem-loop with SmpB. tmRNA is encoded by the ssrA gene; the 2 termini fold to resemble tRNA(Ala) and it encodes a 'tag peptide', a short internal open reading frame. During trans-translation Ala-aminoacylated tmRNA acts like a tRNA, entering the A-site of stalled ribosomes, displacing the stalled mRNA. The ribosome then switches to translate the ORF on the tmRNA; the nascent peptide is terminated with the 'tag peptide' encoded by the tmRNA and targeted for degradation. The ribosome is freed to recommence translation, which seems to be the essential function of trans-translation. The polypeptide is SsrA-binding protein (Aeromonas salmonicida (strain A449)).